We begin with the raw amino-acid sequence, 475 residues long: AAA-ATPase At1g43910 (475 aa).

The helical transmembrane segment at 11–28 (VSAVFSLYTSFSAITMLF) threads the bilayer. The residue at position 85 (T85) is a Phosphothreonine. Residue 246–253 (GPPGTGKS) coordinates ATP. 2 disordered regions span residues 306–328 (SRRR…PQKR) and 453–475 (KGED…EAET). Positions 457 to 467 (SSVEEEGEIED) are enriched in acidic residues.

Belongs to the AAA ATPase family. BCS1 subfamily. Mg(2+) is required as a cofactor. In terms of tissue distribution, expressed in developing shoots.

It is found in the membrane. It carries out the reaction ATP + H2O = ADP + phosphate + H(+). This chain is AAA-ATPase At1g43910, found in Arabidopsis thaliana (Mouse-ear cress).